The sequence spans 1234 residues: ATP-dependent helicase/nuclease subunit A (1234 aa).

In terms of domain architecture, UvrD-like helicase ATP-binding spans 2–475; that stretch reads TQFTTSQQAA…IILAENFRST (474 aa). 23–30 contributes to the ATP binding site; it reads ASAGSGKT. The region spanning 507-806 is the UvrD-like helicase C-terminal domain; the sequence is YGALDYGDAH…KLMTIHKSKG (300 aa).

It belongs to the helicase family. AddA subfamily. Heterodimer of AddA and AddB/RexB. Mg(2+) serves as cofactor.

It carries out the reaction Couples ATP hydrolysis with the unwinding of duplex DNA by translocating in the 3'-5' direction.. The enzyme catalyses ATP + H2O = ADP + phosphate + H(+). The heterodimer acts as both an ATP-dependent DNA helicase and an ATP-dependent, dual-direction single-stranded exonuclease. Recognizes the chi site generating a DNA molecule suitable for the initiation of homologous recombination. The AddA nuclease domain is required for chi fragment generation; this subunit has the helicase and 3' -&gt; 5' nuclease activities. The protein is ATP-dependent helicase/nuclease subunit A of Lacticaseibacillus paracasei (strain ATCC 334 / BCRC 17002 / CCUG 31169 / CIP 107868 / KCTC 3260 / NRRL B-441) (Lactobacillus paracasei).